A 467-amino-acid chain; its full sequence is Mothers against decapentaplegic homolog 2 (467 aa).

Ser2 is subject to N-acetylserine. Residue Thr8 is modified to Phosphothreonine. The region spanning 10 to 176 is the MH1 domain; the sequence is PVVKRLLGWK…YQRVETPVLP (167 aa). Lys19 is modified (N6-acetyllysine). Cys74, Cys149, Cys161, and His166 together coordinate Zn(2+). The segment covering 207-217 has biased composition (polar residues); it reads PAGIEPQSNYI. Positions 207 to 251 are disordered; it reads PAGIEPQSNYIPETPPPGYISEDGETSDQQLNQSMDTGSPAELSP. Thr220 carries the phosphothreonine modification. Residues 221–225 carry the PY-motif motif; sequence PPPGY. Positions 233–243 are enriched in polar residues; the sequence is SDQQLNQSMDT. Ser240 carries the post-translational modification Phosphoserine; by CAMK2. A phosphoserine mark is found at Ser245, Ser250, Ser255, Ser458, Ser460, and Ser464. The region spanning 274 to 467 is the MH2 domain; that stretch reads WCSIAYYELN…SPSVRCSSMS (194 aa). 2 positions are modified to phosphoserine; by TGFBR1: Ser465 and Ser467.

It belongs to the dwarfin/SMAD family. Monomer; in the absence of TGF-beta. Heterodimer; in the presence of TGF-beta. Forms a heterodimer with co-SMAD, SMAD4, in the nucleus to form the transactivation complex SMAD2/SMAD4. Found in a complex with SMAD3 and TRIM33 upon addition of TGF-beta. Identified in a complex that contains at least ZNF451, SMAD2, SMAD3 and SMAD4. Interacts (via the MH2 domain) with ZFYVE9; may form trimers with the SMAD4 co-SMAD. Interacts with TAZ/WWRT1. Interacts with FOXH1. Interacts with SNW1. Interacts with CREB-binding protein (CBP) and EP300. Interacts with SNON. Interacts with ALK4/ACVR1B. Interacts with SKOR1. Interacts with SKOR2. Interacts with PRDM16. Interacts (via MH2 domain) with LEMD3. Interacts with RBPMS. Interacts with WWP1. Interacts (dephosphorylated form, via the MH1 and MH2 domains) with RANBP3 (via its C-terminal R domain); the interaction results in the export of dephosphorylated SMAD3 out of the nucleus and termination of the TGF-beta signaling. Interacts with PDPK1 (via PH domain). Interacts with DAB2; the interactions are enhanced upon TGF-beta stimulation. Interacts with USP15. Interacts with PPP5C. Interacts with LDLRAD4 (via the SMAD interaction motif). Interacts (via MH2 domain) with PMEPA1 (via the SMAD interaction motif). Interacts with ZFHX3. Interacts with ZNF451. Interacts with SMURF2 when phosphorylated on Ser-465/467. Interacts with PPM1A. Interacts with TGF-beta. Interacts with TGFBR1. Interacts with TGIF. Interacts with SMAD3 and TRIM33. Interacts with ZNF580. Interacts with NEDD4L in response to TGF-beta. Interacts with HGS. Interacts with AIP1. Interacts with WWP1. Interacts with PML. Interacts weakly with ZNF8. Interacts (when phosphorylated) with RNF111; RNF111 acts as an enhancer of the transcriptional responses by mediating ubiquitination and degradation of SMAD2 inhibitors. Interacts with YAP1 (when phosphorylated at 'Ser-112'). Interacts when phosphorylated with IPO7; the interaction facilitates translocation of SMAD2 to the nucleus. Interacts with MTMR4; negatively regulates TGF-beta signaling through SMAD2 dephosphorylation and retention in endosomes. In response to TGF-beta, phosphorylated on the C-terminal SXS motif by TGF-beta and activin type 1 receptor kinases, phosphorylation declines progressively in a KMT5A-dependent manner. Phosphorylation in this motif is required for interaction with a number of proteins including SMURF2, SNON and SMAD4 in response to TGF-beta. Dephosphorylated in this motif by PPM1A leading to disruption of the SMAD2/3-SMAD4 complex, nuclear export and termination of the TGF-beta signaling. In response to decorin, the naturally occurring inhibitor of TGF-beta signaling, phosphorylated on Ser-240 by CaMK2. Phosphorylated by MAPK3 upon EGF stimulation; which increases transcriptional activity and stability, and is blocked by calmodulin. Phosphorylated by PDPK1. Post-translationally, in response to TGF-beta, ubiquitinated by NEDD4L; which promotes its degradation. Monoubiquitinated, leading to prevent DNA-binding. Deubiquitination by USP15 alleviates inhibition and promotes activation of TGF-beta target genes. Ubiquitinated by RNF111, leading to its degradation: only SMAD2 proteins that are 'in use' are targeted by RNF111, RNF111 playing a key role in activating SMAD2 and regulating its turnover. In terms of processing, acetylated on Lys-19 by coactivators in response to TGF-beta signaling, which increases transcriptional activity.

It localises to the cytoplasm. The protein resides in the nucleus. Its function is as follows. Receptor-regulated SMAD (R-SMAD) that is an intracellular signal transducer and transcriptional modulator activated by TGF-beta (transforming growth factor) and activin type 1 receptor kinases. Binds the TRE element in the promoter region of many genes that are regulated by TGF-beta and, on formation of the SMAD2/SMAD4 complex, activates transcription. Promotes TGFB1-mediated transcription of odontoblastic differentiation genes in dental papilla cells. Positively regulates PDPK1 kinase activity by stimulating its dissociation from the 14-3-3 protein YWHAQ which acts as a negative regulator. The polypeptide is Mothers against decapentaplegic homolog 2 (Smad2) (Mus musculus (Mouse)).